An 848-amino-acid polypeptide reads, in one-letter code: Transforming growth factor beta receptor type 3 (848 aa).

An N-terminal signal peptide occupies residues 1 to 20 (MTLHCVVALFALISSCLATA). Over 21 to 784 (GPEPGVQCAL…IFHGLDTLTV (764 aa)) the chain is Extracellular. N34 and N141 each carry an N-linked (GlcNAc...) asparagine glycan. A disulfide bond links C52 and C197. The disordered stretch occupies residues 390–448 (SGEGAARHGGLPFPFPYIPRRGRQDGGKDRLPRPKDPVVPSIQLLPGPREPQEAQGSRD). A compositionally biased stretch (basic and acidic residues) spans 411 to 425 (GRQDGGKDRLPRPKD). A ZP domain is found at 454-729 (RCDSEKMLVA…PKCVLPDEAC (276 aa)). N491 carries N-linked (GlcNAc...) asparagine glycosylation. O-linked (Xyl...) (glycosaminoglycan) serine glycosylation is found at S529, S533, and S544. N-linked (GlcNAc...) asparagine glycosylation is found at N570, N589, and N696. Cystine bridges form between C638–C704, C659–C729, and C709–C722. Residues 736-750 (MIWAMMQNKKTFTKP) are interaction with TGF-beta ligand. The chain crosses the membrane as a helical span at residues 785–806 (MGIAFAAFVIGALLTGALWYIY). At 807–848 (SHTGDSAGRQPVPTSPPASENSSAAHSLGSTQSTPCSSSSAA) the chain is on the cytoplasmic side. Residues 813–848 (AGRQPVPTSPPASENSSAAHSLGSTQSTPCSSSSAA) are disordered. The segment covering 833–848 (SLGSTQSTPCSSSSAA) has biased composition (low complexity). Position 837 is a phosphothreonine (T837).

Forms homodimers and homooligomers. Interacts with DYNLT4. Interacts with integrin ITGA5:ITGB1; this interaction promotes the internalization and trafficking of ITGA5:ITGB1 into endocytic vesicles. Interacts with TGFB1, BMP2, BMP5, BMP7 or GDF5 and inhibin A via the ligand binding domains. Interacts with ALK3/BMPR1A; this interaction results in the cell surface retention of BMPR1A. Interacts with ALK6/BMPR1B; this interaction enhances BMPR1B-mediated stimulation of the BMP signaling pathway. Interacts with the scaffolding protein beta-arrestin2/ARRB2; this interaction mediates internalization of TGFBR3 and thus regulates migration, actin cytoskeleton and activation of CDC42. Post-translationally, extensively modified by glycosaminoglycan groups (GAG). In terms of processing, phosphorylated in the cytoplasmic domain by the type II receptor TGFBR2 at THR-837 to mediate recruitment of ARRB2 and subsequent internalization of TGFBR2 and TGFBR3.

The protein resides in the cell membrane. It is found in the secreted. The protein localises to the extracellular space. It localises to the extracellular matrix. Its function is as follows. Cell surface receptor that regulates diverse cellular processes including cell proliferation, differentiation, migration, and apoptosis. Initiates BMP, inhibin, and TGF-beta signaling pathways by interacting with different ligands including TGFB1, BMP2, BMP5, BMP7 or GDF5. Alternatively, acts as a cell surface coreceptor for BMP ligands, serving to enhance ligand binding by differentially regulating BMPR1A/ALK3 and BMPR1B/ALK6 receptor trafficking. Promotes epithelial cell adhesion, focal adhesion formation and integrin signaling during epithelial cell spreading on fibronectin. By interacting with the scaffolding protein beta-arrestin2/ARRB2, regulates migration or actin cytoskeleton and promotes the activation of CDC42 as well as the inhibition of NF-kappa-B. In gonadotrope cells, acts as an inhibin A coreceptor and regulates follicle-stimulating hormone (FSH) levels and female fertility. Plays a role in the inhibition of directed and random cell migration in epithelial cells by altering the actin cytoskeletal organization. Participates in epithelial-mesenchymal transformation (EMT) upon binding to BMP2 or TGFB2, by activating the PAR6/SMURF1/RHOA pathway. The sequence is that of Transforming growth factor beta receptor type 3 (TGFBR3) from Sus scrofa (Pig).